The sequence spans 317 residues: Pantothenate kinase (317 aa).

An ATP-binding site is contributed by Gly-95–Ser-102.

This sequence belongs to the prokaryotic pantothenate kinase family.

The protein localises to the cytoplasm. The enzyme catalyses (R)-pantothenate + ATP = (R)-4'-phosphopantothenate + ADP + H(+). It participates in cofactor biosynthesis; coenzyme A biosynthesis; CoA from (R)-pantothenate: step 1/5. This chain is Pantothenate kinase, found in Myxococcus xanthus (strain DK1622).